Here is a 276-residue protein sequence, read N- to C-terminus: NH(3)-dependent NAD(+) synthetase (276 aa).

G43–S50 provides a ligand contact to ATP. Position 49 (D49) interacts with Mg(2+). Residue R146 coordinates deamido-NAD(+). T166 lines the ATP pocket. E171 serves as a coordination point for Mg(2+). Residues K179 and D186 each contribute to the deamido-NAD(+) site. ATP is bound by residues K195 and T217. H266–K267 provides a ligand contact to deamido-NAD(+).

The protein belongs to the NAD synthetase family. As to quaternary structure, homodimer.

It catalyses the reaction deamido-NAD(+) + NH4(+) + ATP = AMP + diphosphate + NAD(+) + H(+). It functions in the pathway cofactor biosynthesis; NAD(+) biosynthesis; NAD(+) from deamido-NAD(+) (ammonia route): step 1/1. Functionally, catalyzes the ATP-dependent amidation of deamido-NAD to form NAD. Uses ammonia as a nitrogen source. This chain is NH(3)-dependent NAD(+) synthetase, found in Vibrio cholerae serotype O1 (strain ATCC 39541 / Classical Ogawa 395 / O395).